The chain runs to 149 residues: Large ribosomal subunit protein bL9 (149 aa).

Belongs to the bacterial ribosomal protein bL9 family.

Functionally, binds to the 23S rRNA. This Dichelobacter nodosus (strain VCS1703A) protein is Large ribosomal subunit protein bL9.